Here is a 60-residue protein sequence, read N- to C-terminus: Large ribosomal subunit protein bL32 (60 aa).

Positions Met1 to His20 are enriched in basic residues. Residues Met1–Asp60 form a disordered region. Basic and acidic residues predominate over residues Ile28–Leu44.

It belongs to the bacterial ribosomal protein bL32 family.

The chain is Large ribosomal subunit protein bL32 from Caulobacter vibrioides (strain ATCC 19089 / CIP 103742 / CB 15) (Caulobacter crescentus).